The chain runs to 367 residues: Dual-specificity RNA methyltransferase RlmN (367 aa).

The active-site Proton acceptor is E93. Residues E99–D333 enclose the Radical SAM core domain. A disulfide bridge links C106 with C338. 3 residues coordinate [4Fe-4S] cluster: C113, C117, and C120. S-adenosyl-L-methionine contacts are provided by residues G162–E163, S194, S216–H218, and N295. The S-methylcysteine intermediate role is filled by C338.

This sequence belongs to the radical SAM superfamily. RlmN family. Requires [4Fe-4S] cluster as cofactor.

It localises to the cytoplasm. The catalysed reaction is adenosine(2503) in 23S rRNA + 2 reduced [2Fe-2S]-[ferredoxin] + 2 S-adenosyl-L-methionine = 2-methyladenosine(2503) in 23S rRNA + 5'-deoxyadenosine + L-methionine + 2 oxidized [2Fe-2S]-[ferredoxin] + S-adenosyl-L-homocysteine. It carries out the reaction adenosine(37) in tRNA + 2 reduced [2Fe-2S]-[ferredoxin] + 2 S-adenosyl-L-methionine = 2-methyladenosine(37) in tRNA + 5'-deoxyadenosine + L-methionine + 2 oxidized [2Fe-2S]-[ferredoxin] + S-adenosyl-L-homocysteine. Its function is as follows. Specifically methylates position 2 of adenine 2503 in 23S rRNA and position 2 of adenine 37 in tRNAs. m2A2503 modification seems to play a crucial role in the proofreading step occurring at the peptidyl transferase center and thus would serve to optimize ribosomal fidelity. The sequence is that of Dual-specificity RNA methyltransferase RlmN from Aeromonas hydrophila subsp. hydrophila (strain ATCC 7966 / DSM 30187 / BCRC 13018 / CCUG 14551 / JCM 1027 / KCTC 2358 / NCIMB 9240 / NCTC 8049).